We begin with the raw amino-acid sequence, 288 residues long: Elongation factor Ts (288 aa).

Residues 82 to 85 are involved in Mg(2+) ion dislocation from EF-Tu; that stretch reads TDFV.

It belongs to the EF-Ts family.

It is found in the cytoplasm. In terms of biological role, associates with the EF-Tu.GDP complex and induces the exchange of GDP to GTP. It remains bound to the aminoacyl-tRNA.EF-Tu.GTP complex up to the GTP hydrolysis stage on the ribosome. The sequence is that of Elongation factor Ts from Chlorobium phaeovibrioides (strain DSM 265 / 1930) (Prosthecochloris vibrioformis (strain DSM 265)).